The following is a 1076-amino-acid chain: MKSRFSTIDLRAVLAELNASLLGMRVNNVYDVDNKTYLIRLQKPDFKATLLLESGIRIHTTEFEWPKNMMPSSFAMKCRKHLKSRRLVSAKQLGVDRIVDFQFGSDEAAYHLIIELYDRGNIVLTDYEYVILNILRFRTDEADDVKFAVRERYPLDHARAAEPLLTLERLTEIVASAPKGELLKRVLNPLLPYGPALIEHCLLENGFSGNVKVDEKLETKDIEKVLVSLQKAEDYMKTTSNFSGKGYIIQKREIKPSLEADKPVEDILTYEEFHPFLFSQHSQCPYIEFESFDKAVDEFYSKIEGQKIDLKALQQEKQALKKLDNVRKDHENRLEALQQAQEIDKLKGELIEMNLQIVDRAIQVVRSALANQIDWTEIGLIVKEAQAQGDPVASAIKELKLQTNHVTMLLRNPYLLSEEEDDDVDGDVNVEKNETEPPKGKKKKQKNKQLQKPQKNKPLLVDVDLSLSAYANAKKYYDHKRYAAKKTQKTVEAAEKAFKSAEKKTKQTLKEVQTVTSIQKARKVYWFEKFLWFISSENYLIIGGRDQQQNEIIVKRYLTPGDIYVHADLHGATSCVIKNPTGEPIPPRTLTEAGTMALCYSAAWDARVITSAWWVYHHQVSKTAPTGEYLTTGSFMIRGKKNFLPPSYLMMGFSFLFKVDESCVWRHQGERKVRVQDEDMETLASCTSELISEEMEQLDGGDTSSDEDKEEHETPVEVELMTQVDQEDITLQSGRDELNEELIQEESSEDEGEYEEVRKDQDSVGEMKDEGEETLNYPDTTIDLSHLQPQRSIQKLASKEESSNSSDSKSQSRRHLSAKERREMKKKKLPSDSGDLEALEGKDKEKESTVHIETHQNTSKNVAAVQPMKRGQKSKMKKMKEKYKDQDEEDRELIMKLLGSAGSNKEEKGKKGKKGKTKDEPVKKQPQKPRGGQRVSDNIKKETPFLEVITHELQDFAVDDPHDDKEEQDLDQQGNEENLFDSLTGQPHPEDVLLFAIPICAPYTTMTNYKYKVKLTPGVQKKGKAAKTALNSFMHSKEATAREKDLFRSVKDTDLSRNIPGKVKVSAPNLLNVKRK.

At Thr7 the chain carries Phosphothreonine. Positions 296–359 (VDEFYSKIEG…LIEMNLQIVD (64 aa)) form a coiled coil. Ser417 carries the post-translational modification Phosphoserine. The tract at residues 420 to 453 (EDDDVDGDVNVEKNETEPPKGKKKKQKNKQLQKP) is disordered. Residues 429 to 439 (NVEKNETEPPK) show a composition bias toward basic and acidic residues. Residues 440–449 (GKKKKQKNKQ) show a composition bias toward basic residues. Positions 483–514 (AAKKTQKTVEAAEKAFKSAEKKTKQTLKEVQT) form a coiled coil. Composition is skewed to acidic residues over residues 691-710 (ISEEMEQLDGGDTSSDEDKE) and 742-754 (LIQEESSEDEGEY). Disordered regions lie at residues 691–715 (ISEEMEQLDGGDTSSDEDKEEHETP) and 742–972 (LIQE…DLDQ). Residues Ser747, Ser748, and Ser763 each carry the phosphoserine modification. Basic and acidic residues predominate over residues 755–768 (EEVRKDQDSVGEMK). Polar residues predominate over residues 777 to 795 (YPDTTIDLSHLQPQRSIQK). Phosphoserine is present on Ser831. Residues 839–854 (LEGKDKEKESTVHIET) are compositionally biased toward basic and acidic residues. Residues 869-894 (KRGQKSKMKKMKEKYKDQDEEDRELI) are a coiled coil. A compositionally biased stretch (basic residues) spans 870-881 (RGQKSKMKKMKE). Residues 937-965 (DNIKKETPFLEVITHELQDFAVDDPHDDK) show a composition bias toward basic and acidic residues.

Belongs to the NEMF family. In terms of assembly, component of the ribosome quality control complex (RQC), composed of the E3 ubiquitin ligase LTN1, TCF25 and NEMF associated with the 60S ribosomal subunit. The complex probably also contains VCP/p97 and its ubiquitin-binding cofactors. Interacts (via its N-terminus) with XPO1. As to expression, expressed in brain, heart, liver, lung, spleen, and skeletal muscle. Also expressed at lower levels in stomach and testis.

Its subcellular location is the cytoplasm. The protein resides in the cytosol. The protein localises to the nucleus. Functionally, key component of the ribosome quality control complex (RQC), a ribosome-associated complex that mediates the extraction of incompletely synthesized nascent chains from stalled ribosomes as well as their ubiquitin-mediated proteasomal degradation. Thereby, frees 60S subunit ribosomes from the stalled translation complex and prevents the accumulation of nascent polypeptide chains that are potentially toxic for the cell. Within the RQC complex, NEMF specifically binds stalled 60S ribosomal subunits by recognizing an exposed, nascent chain-conjugated tRNA moiety and promotes the recruitment of LTN1 to stalled 60S subunits. Following binding to stalled 60S ribosomal subunits, NEMF mediates CAT tailing by recruiting alanine-charged tRNA to the A-site and directing the elongation of stalled nascent chains independently of mRNA or 40S subunits, leading to non-templated C-terminal alanine extensions (CAT tails). Mainly recruits alanine-charged tRNAs, but can also other amino acid-charged tRNAs. CAT tailing is required to promote ubiquitination of stalled nascent chains by different E3 ubiquitin-protein ligases. In the canonical RQC pathway (RQC-L), CAT tailing facilitates LTN1-dependent ubiquitination by exposing lysine residues that would otherwise remain buried in the ribosomal exit tunnel. In the alternative RQC pathway (RQC-C) CAT tailing creates an C-degron mainly composed of alanine that is recognized by the CRL2(KLHDC10) and RCHY1/PIRH2 E3 ligases, leading to ubiquitination and degradation of stalled nascent chains. NEMF may also indirectly play a role in nuclear export. This chain is Ribosome quality control complex subunit NEMF, found in Homo sapiens (Human).